A 331-amino-acid chain; its full sequence is Protein C10 (331 aa).

It belongs to the poxviridae C4/C10 protein family.

This chain is Protein C10, found in Vaccinia virus (strain Copenhagen) (VACV).